The following is a 333-amino-acid chain: Electron transfer flavoprotein subunit alpha, mitochondrial (333 aa).

A mitochondrion-targeting transit peptide spans methionine 1 to phenylalanine 19. Residues glutamine 20–leucine 204 form a domain I region. Lysine 59 carries the N6-acetyllysine; alternate modification. An N6-succinyllysine; alternate modification is found at lysine 59. Lysine 62 carries the N6-acetyllysine modification. An N6-acetyllysine; alternate modification is found at lysine 69. The residue at position 69 (lysine 69) is an N6-succinyllysine; alternate. The residue at position 75 (lysine 75) is an N6-acetyllysine. Lysine 85 carries the N6-acetyllysine; alternate modification. An N6-succinyllysine; alternate modification is found at lysine 85. Position 93 is a phosphothreonine (threonine 93). An N6-acetyllysine mark is found at lysine 101 and lysine 139. Serine 140 bears the Phosphoserine mark. Lysine 158 is subject to N6-acetyllysine; alternate. Lysine 158 is subject to N6-succinyllysine; alternate. At lysine 164 the chain carries N6-acetyllysine. At lysine 187 the chain carries N6-succinyllysine. Lysine 203 carries the N6-acetyllysine; alternate modification. Lysine 203 is subject to N6-succinyllysine; alternate. Residues threonine 205–lysine 333 are domain II. Lysine 216 carries the N6-succinyllysine modification. FAD is bound at residue arginine 223. 2 positions are modified to N6-acetyllysine; alternate: lysine 226 and lysine 232. Residues lysine 226 and lysine 232 each carry the N6-succinyllysine; alternate modification. Residues serine 248, valine 263–threonine 266, serine 281–histidine 286, and asparagine 300 each bind FAD. Lysine 301 is subject to N6-succinyllysine. Aspartate 318–leucine 319 is an FAD binding site.

This sequence belongs to the ETF alpha-subunit/FixB family. As to quaternary structure, heterodimer composed of ETFA and ETFB. Identified in a complex that contains ETFA, ETFB and ETFRF1. Interaction with ETFRF1 promotes dissociation of the bound FAD and loss of electron transfer activity. Interacts with TASOR. The cofactor is FAD.

Its subcellular location is the mitochondrion matrix. Functionally, heterodimeric electron transfer flavoprotein that accepts electrons from several mitochondrial dehydrogenases, including acyl-CoA dehydrogenases, glutaryl-CoA and sarcosine dehydrogenase. It transfers the electrons to the main mitochondrial respiratory chain via ETF-ubiquinone oxidoreductase (ETF dehydrogenase). Required for normal mitochondrial fatty acid oxidation and normal amino acid metabolism. This Rattus norvegicus (Rat) protein is Electron transfer flavoprotein subunit alpha, mitochondrial (Etfa).